Here is a 238-residue protein sequence, read N- to C-terminus: Probable transcriptional regulatory protein CPn_0573/CP_0176/CPj0573/CpB0595 (238 aa).

A disordered region spans residues 1-20 (MAGHSKWANTKHRKERADHK). Over residues 9–20 (NTKHRKERADHK) the composition is skewed to basic residues.

Belongs to the TACO1 family.

It localises to the cytoplasm. The polypeptide is Probable transcriptional regulatory protein CPn_0573/CP_0176/CPj0573/CpB0595 (Chlamydia pneumoniae (Chlamydophila pneumoniae)).